The primary structure comprises 105 residues: Defensin-like protein 106 (105 aa).

The first 24 residues, 1 to 24 (MANTPKTLIAFVFSVIVIISYVHC), serve as a signal peptide directing secretion. Disulfide bonds link C57–C94, C63–C87, C73–C92, and C77–C93.

This sequence belongs to the DEFL family.

It is found in the secreted. This Arabidopsis thaliana (Mouse-ear cress) protein is Defensin-like protein 106.